Here is a 116-residue protein sequence, read N- to C-terminus: Putative pterin-4-alpha-carbinolamine dehydratase (116 aa).

The protein belongs to the pterin-4-alpha-carbinolamine dehydratase family.

It catalyses the reaction (4aS,6R)-4a-hydroxy-L-erythro-5,6,7,8-tetrahydrobiopterin = (6R)-L-erythro-6,7-dihydrobiopterin + H2O. This is Putative pterin-4-alpha-carbinolamine dehydratase from Stenotrophomonas maltophilia (strain R551-3).